The following is a 355-amino-acid chain: RNA binding protein fox-1 homolog 1 (355 aa).

A disordered region spans residues 1–123; it reads MNCEREQLRG…QPKRLHVSNI (123 aa). Positions 70-112 are enriched in polar residues; that stretch reads QSHSEQSAADTSAHTVSGTATTDDSAPTDGQPQTQPSENTENK. Residues 116 to 174 enclose the RRM domain; sequence KRLHVSNIPFRFRDPDLRQMFGGFGFVTFENSADADRAREKLHGTVVEGRKIEVNNATA. Arginine 298 carries the asymmetric dimethylarginine modification.

As to quaternary structure, binds to the C-terminus of ATXN2.

It localises to the nucleus. The protein localises to the cytoplasm. In terms of biological role, RNA-binding protein that regulates alternative splicing events by binding to 5'-UGCAUGU-3' elements. Prevents binding of U2AF2 to the 3'-splice site. Regulates alternative splicing of tissue-specific exons and of differentially spliced exons during erythropoiesis. In Bos taurus (Bovine), this protein is RNA binding protein fox-1 homolog 1 (RBFOX1).